The primary structure comprises 310 residues: D-apiose import binding protein (310 aa).

A signal peptide spans 1-21; it reads MKLLKASLVALSLAASTFVYA. Residues Asn-35, 111 to 112, 158 to 160, Arg-164, Asn-214, Asp-239, and Gln-260 contribute to the D-apiofuranose site; these read DR and DTN.

It belongs to the bacterial solute-binding protein 2 family.

It is found in the periplasm. Its function is as follows. Part of an ABC transporter complex involved in D-apiose import. Binds D-apiose, D-ribose and D-ribulose. This Actinobacillus succinogenes (strain ATCC 55618 / DSM 22257 / CCUG 43843 / 130Z) protein is D-apiose import binding protein.